The chain runs to 248 residues: Proteasome subunit alpha (248 aa).

Positions 229–248 (LLEADGATTEAESSAEEEDE) are disordered.

The protein belongs to the peptidase T1A family. As to quaternary structure, the 20S proteasome core is composed of 14 alpha and 14 beta subunits that assemble into four stacked heptameric rings, resulting in a barrel-shaped structure. The two inner rings, each composed of seven catalytic beta subunits, are sandwiched by two outer rings, each composed of seven alpha subunits. The catalytic chamber with the active sites is on the inside of the barrel. Has a gated structure, the ends of the cylinder being occluded by the N-termini of the alpha-subunits. Is capped by the proteasome-associated ATPase, ARC.

It is found in the cytoplasm. Its pathway is protein degradation; proteasomal Pup-dependent pathway. Its activity is regulated as follows. The formation of the proteasomal ATPase ARC-20S proteasome complex, likely via the docking of the C-termini of ARC into the intersubunit pockets in the alpha-rings, may trigger opening of the gate for substrate entry. Interconversion between the open-gate and close-gate conformations leads to a dynamic regulation of the 20S proteasome proteolysis activity. Its function is as follows. Component of the proteasome core, a large protease complex with broad specificity involved in protein degradation. The protein is Proteasome subunit alpha of Streptomyces scabiei (strain 87.22).